We begin with the raw amino-acid sequence, 83 residues long: HPITESAEMPYPGPASLEERGVGSLDDLSLSEQNYPPQRGAGLRYATLEVLLEKQSLLNPFSRVFGIRKQFAGTTECFWKYCV.

A propeptide spanning residues 49-71 is cleaved from the precursor; the sequence is EVLLEKQSLLNPFSRVFGIRKQF. A disulfide bridge connects residues cysteine 77 and cysteine 82.

The protein belongs to the urotensin-2 family.

Its subcellular location is the secreted. Functionally, urotensin is found in the teleost caudal neurosecretory system. It has a suggested role in osmoregulation and as a corticotropin-releasing factor. The non-hormonal portion of this precursor may be a urotensin binding protein, urophysin. The polypeptide is Urotensin-2 (Platichthys flesus (European flounder)).